Here is a 400-residue protein sequence, read N- to C-terminus: Ornithine aminotransferase (400 aa).

Lys-254 carries the N6-(pyridoxal phosphate)lysine modification.

It belongs to the class-III pyridoxal-phosphate-dependent aminotransferase family. OAT subfamily. The cofactor is pyridoxal 5'-phosphate.

The protein resides in the cytoplasm. It catalyses the reaction a 2-oxocarboxylate + L-ornithine = L-glutamate 5-semialdehyde + an L-alpha-amino acid. The protein operates within amino-acid biosynthesis; L-proline biosynthesis; L-glutamate 5-semialdehyde from L-ornithine: step 1/1. Functionally, catalyzes the interconversion of ornithine to glutamate semialdehyde. The chain is Ornithine aminotransferase from Exiguobacterium sp. (strain ATCC BAA-1283 / AT1b).